Consider the following 297-residue polypeptide: Sirohydrochlorin cobaltochelatase CbiKP (297 aa).

The first 28 residues, 1–28 (MSRHPMVTRLLCLVFSCLIILACSPAFA), serve as a signal peptide directing secretion. H124 is a heme binding site. H182 (proton acceptor) is an active-site residue. The Co(2+) site is built by H182, E212, and H244.

Belongs to the CbiK family. In terms of assembly, homotetramer; dimer of dimers.

Its subcellular location is the periplasm. It catalyses the reaction Co-sirohydrochlorin + 2 H(+) = sirohydrochlorin + Co(2+). It carries out the reaction siroheme + 2 H(+) = sirohydrochlorin + Fe(2+). Functionally, catalyzes the insertion of Co(2+) into sirohydrochlorin. To a lesser extent, is also able to insert Fe(2+) into sirohydrochlorin, yielding siroheme. Its periplasmic location means that it cannot participate in cobalamin biosynthesis and its genomic environment suggests it is likely to be associated with a heme or metal transport system. This Nitratidesulfovibrio vulgaris (strain ATCC 29579 / DSM 644 / CCUG 34227 / NCIMB 8303 / VKM B-1760 / Hildenborough) (Desulfovibrio vulgaris) protein is Sirohydrochlorin cobaltochelatase CbiKP (cbiKp).